The chain runs to 94 residues: Large ribosomal subunit protein bL31 (94 aa).

Positions 64 to 94 (KYGMANPDEDSTKNTKSSKKETSEDSSSKGS) are disordered. Basic and acidic residues predominate over residues 73 to 94 (DSTKNTKSSKKETSEDSSSKGS).

It belongs to the bacterial ribosomal protein bL31 family. Type A subfamily. In terms of assembly, part of the 50S ribosomal subunit.

In terms of biological role, binds the 23S rRNA. The protein is Large ribosomal subunit protein bL31 of Prochlorococcus marinus (strain SARG / CCMP1375 / SS120).